A 118-amino-acid polypeptide reads, in one-letter code: UPF0102 protein Bcav_2532 (118 aa).

This sequence belongs to the UPF0102 family.

The protein is UPF0102 protein Bcav_2532 of Beutenbergia cavernae (strain ATCC BAA-8 / DSM 12333 / CCUG 43141 / JCM 11478 / NBRC 16432 / NCIMB 13614 / HKI 0122).